We begin with the raw amino-acid sequence, 88 residues long: RNA-binding protein Hfq (88 aa).

In terms of domain architecture, Sm spans 9 to 68 (DPFLNALRRERIPVSIYLVNGIKLQGQIESFDQFVILLKNTVNQMVYKHAISTVVPARAV). Residues 66 to 88 (RAVSHHSASDRPQGERPQEKTEE) form a disordered region. The span at 72 to 88 (SASDRPQGERPQEKTEE) shows a compositional bias: basic and acidic residues.

The protein belongs to the Hfq family. Homohexamer.

Its function is as follows. RNA chaperone that binds small regulatory RNA (sRNAs) and mRNAs to facilitate mRNA translational regulation in response to envelope stress, environmental stress and changes in metabolite concentrations. Also binds with high specificity to tRNAs. This chain is RNA-binding protein Hfq, found in Aliivibrio fischeri (strain ATCC 700601 / ES114) (Vibrio fischeri).